A 297-amino-acid chain; its full sequence is Formamidopyrimidine-DNA glycosylase (297 aa).

The active-site Schiff-base intermediate with DNA is P2. The active-site Proton donor is the E3. The Proton donor; for beta-elimination activity role is filled by K58. DNA-binding residues include H106, R125, and R168. Residues 259–295 (RVYDREGLACTARGCRGVVRRVVQSGRSTFFCEVCQP) form an FPG-type zinc finger. Catalysis depends on R285, which acts as the Proton donor; for delta-elimination activity.

Belongs to the FPG family. As to quaternary structure, monomer. The cofactor is Zn(2+).

The enzyme catalyses Hydrolysis of DNA containing ring-opened 7-methylguanine residues, releasing 2,6-diamino-4-hydroxy-5-(N-methyl)formamidopyrimidine.. The catalysed reaction is 2'-deoxyribonucleotide-(2'-deoxyribose 5'-phosphate)-2'-deoxyribonucleotide-DNA = a 3'-end 2'-deoxyribonucleotide-(2,3-dehydro-2,3-deoxyribose 5'-phosphate)-DNA + a 5'-end 5'-phospho-2'-deoxyribonucleoside-DNA + H(+). Involved in base excision repair of DNA damaged by oxidation or by mutagenic agents. Acts as a DNA glycosylase that recognizes and removes damaged bases. Has a preference for oxidized purines, such as 7,8-dihydro-8-oxoguanine (8-oxoG). Has AP (apurinic/apyrimidinic) lyase activity and introduces nicks in the DNA strand. Cleaves the DNA backbone by beta-delta elimination to generate a single-strand break at the site of the removed base with both 3'- and 5'-phosphates. The protein is Formamidopyrimidine-DNA glycosylase of Methylobacterium nodulans (strain LMG 21967 / CNCM I-2342 / ORS 2060).